Here is a 525-residue protein sequence, read N- to C-terminus: G-protein regulator 2 (525 aa).

The GoLoco domain occupies 424–445; that stretch reads PVDMMDLIFSMSSRMDDQRTEL. Residues 489-525 form a disordered region; sequence TMNRILKRSKKSKSSLDSTNSIQGDDTRSDDVTMTSK.

Interacts with gpr-1; gpr-1 forms a complex with lin-5 and GDP-bound goa-1.

The protein localises to the cytoplasm. Its subcellular location is the cell cortex. It localises to the cytoskeleton. It is found in the spindle. Functionally, in the 1-cell embryo, probably together with gpr-1, controls nuclear rotation and spindle elongation during mitosis. Complex of gpr-1 and gpr-2, in association with lin-5, activates G-protein signaling to affect mitotic spindle force. Polarity determinants (par genes) may regulate lin-5/gpr-1/gpr-2/goa-1 locally to create the asymmetric forces that drive spindle movement. This chain is G-protein regulator 2 (gpr-2), found in Caenorhabditis elegans.